The following is a 909-amino-acid chain: Short transient receptor potential channel 3 (909 aa).

The tract at residues 1–92 is disordered; the sequence is MSTKVKKCRE…VRGPAFMFGA (92 aa). Topologically, residues 1–447 are cytoplasmic; that stretch reads MSTKVKKCRE…KILRSPFMKF (447 aa). Residues 19–28 are compositionally biased toward acidic residues; the sequence is PEEEDGEAEG. Residues 47-57 show a composition bias toward pro residues; that stretch reads PPCPRAPPSPG. Residues 58–67 show a composition bias toward low complexity; it reads PDASSEGSPS. ANK repeat units lie at residues 99–128, 134–163, 165–191, and 220–249; these read AEEE…TLNV, MGQN…LARI, DALL…FAAS, and PDIT…RIER. Residue Glu146 participates in Ca(2+) binding. The chain crosses the membrane as a helical span at residues 448–465; it reads VAHAASFIIFLGLLVFNA. The Extracellular segment spans residues 466 to 496; the sequence is SDRFEGITTLPNITVIDYPKQIFRVKTTQFT. The N-linked (GlcNAc...) asparagine glycan is linked to Asn477. The helical transmembrane segment at 497 to 515 threads the bilayer; sequence WTEMLIMVWVLGMMWSECK. The Ca(2+) site is built by Glu513, Glu516, and Asn531. The Cytoplasmic segment spans residues 516–528; that stretch reads ELWLEGPREYIVQ. The chain crosses the membrane as a helical span at residues 529–550; sequence LWNVLDFGMLSIFIAAFTARFL. Topologically, residues 551–594 are extracellular; that stretch reads AFLQATKAQQYVDSHVQESDLSEVTLPPEVQYFTYARDKWLPSD. The helical transmembrane segment at 595–618 threads the bilayer; that stretch reads PQIISEGLYAIAVVLSFSRIAYIL. The Cytoplasmic segment spans residues 619-637; that stretch reads PANESFGPLQISLGRTVKD. The ANK 5 repeat unit spans residues 622–651; it reads ESFGPLQISLGRTVKDIFKFMVLFIMVFLA. Residues 638–661 form a helical membrane-spanning segment; sequence IFKFMVLFIMVFLAFMIGMFILYS. Topologically, residues 662–701 are extracellular; it reads YYLGAKVNPAFTTVEESFKTLFWSIFGLSEVTSVVLKYDH. A helical membrane pass occupies residues 702–727; the sequence is KFIENIGYVLYGIYNVTMVVVLLNML. The Cytoplasmic portion of the chain corresponds to 728–909; that stretch reads IAMINSSYQE…KLNPSALRCE (182 aa). Positions 859, 862, 864, and 871 each coordinate Ca(2+).

It belongs to the transient receptor (TC 1.A.4) family. STrpC subfamily. TRPC3 sub-subfamily. As to quaternary structure, homotetramer. Interacts with ITPR1, ITPR3, MX1 and RNF24. Interacts with JPH2; the interaction is involved in maintaining Ca(2+) homeostasis in skeletal muscle and is mediated by JPH2 'Ser-165' phosphorylation.

The protein resides in the cell membrane. It catalyses the reaction Ca(2+)(in) = Ca(2+)(out). Activated by diacylglycerol (DAG) in a membrane-delimited fashion, independently of protein kinase C. Activated by inositol 1,4,5-triphosphate receptors (ITPR) with bound IP3. May be activated by internal calcium store depletion. Inhibited by intracellular Ca(2+). In terms of biological role, forms a receptor-activated non-selective calcium permeant cation channel. May be operated by a phosphatidylinositol second messenger system activated by receptor tyrosine kinases or G-protein coupled receptors. The protein is Short transient receptor potential channel 3 (Trpc3) of Rattus norvegicus (Rat).